A 68-amino-acid chain; its full sequence is Large ribosomal subunit protein bL33c (68 aa).

The protein belongs to the bacterial ribosomal protein bL33 family.

The protein resides in the plastid. This Cuscuta exaltata (Tall dodder) protein is Large ribosomal subunit protein bL33c.